Here is a 410-residue protein sequence, read N- to C-terminus: Sensor histidine kinase GlnK (410 aa).

Topologically, residues 1-15 are extracellular; the sequence is MLITVPLAGELKFYP. Residues 16–36 traverse the membrane as a helical segment; it reads LNEEFRVSFGAPVFFFFLSLL. Residues 37–38 are Cytoplasmic-facing; sequence RH. A helical transmembrane segment spans residues 39-59; the sequence is VPAVLPGFLTGAAVFIFRVFL. The Extracellular segment spans residues 60–71; the sequence is ELWGGGHNGLTP. A helical membrane pass occupies residues 72–92; sequence ILYDQASGFFFYMTYACLFSI. The Cytoplasmic segment spans residues 93-102; sequence LKANRFRERP. A helical transmembrane segment spans residues 103-123; it reads IMLGFIGFMIEVVSDCVELTV. The Extracellular portion of the chain corresponds to 124–139; the sequence is QFLIFHTVVTPEKITD. The helical transmembrane segment at 140-160 threads the bilayer; the sequence is IAVIAISHTFIVMSFYSVLKL. Topologically, residues 161 to 410 are cytoplasmic; it reads YETQSREKQT…LPVRHLIQKG (250 aa). The region spanning 189–405 is the Histidine kinase domain; sequence VHLKKTLKTT…VFAIRLPVRH (217 aa). The residue at position 190 (histidine 190) is a Phosphohistidine; by autocatalysis.

As to quaternary structure, homotrimer. Under poor nitrogen source such as nitrate, the complex between GlnK and AmtB, which are the transmembrane ammonium transporter and its cognate regulator, respectively, interacts with TnrA. GlnK-ATP complex are not able to bind TnrA.

The protein localises to the cell membrane. It catalyses the reaction ATP + protein L-histidine = ADP + protein N-phospho-L-histidine.. Its function is as follows. Member of the two-component regulatory system GlnK/GlnL that positively regulates the expression of the glsA-glnT operon in response to glutamine. It seems that autophosphorylated GlnK transfers a phosphoryl group to GlnL, which positively regulates the expression of the glsA-glnT operon. Interaction between GlnK-AmtB complex and TnrA protects TnrA from proteolytic degradation. This chain is Sensor histidine kinase GlnK, found in Bacillus subtilis (strain 168).